An 879-amino-acid polypeptide reads, in one-letter code: Alanine--tRNA ligase (879 aa).

Zn(2+) contacts are provided by His566, His570, Cys668, and His672.

Belongs to the class-II aminoacyl-tRNA synthetase family. Zn(2+) is required as a cofactor.

It is found in the cytoplasm. The catalysed reaction is tRNA(Ala) + L-alanine + ATP = L-alanyl-tRNA(Ala) + AMP + diphosphate. In terms of biological role, catalyzes the attachment of alanine to tRNA(Ala) in a two-step reaction: alanine is first activated by ATP to form Ala-AMP and then transferred to the acceptor end of tRNA(Ala). Also edits incorrectly charged Ser-tRNA(Ala) and Gly-tRNA(Ala) via its editing domain. The chain is Alanine--tRNA ligase from Listeria welshimeri serovar 6b (strain ATCC 35897 / DSM 20650 / CCUG 15529 / CIP 8149 / NCTC 11857 / SLCC 5334 / V8).